We begin with the raw amino-acid sequence, 374 residues long: Queuine tRNA-ribosyltransferase (374 aa).

Aspartate 89 serves as the catalytic Proton acceptor. Substrate contacts are provided by residues aspartate 89 to phenylalanine 93, aspartate 143, glutamine 187, and glycine 214. The interval glycine 245–aspartate 251 is RNA binding. Catalysis depends on aspartate 264, which acts as the Nucleophile. Positions threonine 269–arginine 273 are RNA binding; important for wobble base 34 recognition. Zn(2+) contacts are provided by cysteine 302, cysteine 304, cysteine 307, and histidine 333.

The protein belongs to the queuine tRNA-ribosyltransferase family. In terms of assembly, homodimer. Within each dimer, one monomer is responsible for RNA recognition and catalysis, while the other monomer binds to the replacement base PreQ1. It depends on Zn(2+) as a cofactor.

The enzyme catalyses 7-aminomethyl-7-carbaguanine + guanosine(34) in tRNA = 7-aminomethyl-7-carbaguanosine(34) in tRNA + guanine. The protein operates within tRNA modification; tRNA-queuosine biosynthesis. Catalyzes the base-exchange of a guanine (G) residue with the queuine precursor 7-aminomethyl-7-deazaguanine (PreQ1) at position 34 (anticodon wobble position) in tRNAs with GU(N) anticodons (tRNA-Asp, -Asn, -His and -Tyr). Catalysis occurs through a double-displacement mechanism. The nucleophile active site attacks the C1' of nucleotide 34 to detach the guanine base from the RNA, forming a covalent enzyme-RNA intermediate. The proton acceptor active site deprotonates the incoming PreQ1, allowing a nucleophilic attack on the C1' of the ribose to form the product. After dissociation, two additional enzymatic reactions on the tRNA convert PreQ1 to queuine (Q), resulting in the hypermodified nucleoside queuosine (7-(((4,5-cis-dihydroxy-2-cyclopenten-1-yl)amino)methyl)-7-deazaguanosine). The protein is Queuine tRNA-ribosyltransferase of Shewanella oneidensis (strain ATCC 700550 / JCM 31522 / CIP 106686 / LMG 19005 / NCIMB 14063 / MR-1).